The primary structure comprises 151 residues: Small ribosomal subunit protein uS15 (151 aa).

Positions Met1–Thr20 are disordered.

The protein belongs to the universal ribosomal protein uS15 family. Part of the 30S ribosomal subunit.

This Methanococcus aeolicus (strain ATCC BAA-1280 / DSM 17508 / OCM 812 / Nankai-3) protein is Small ribosomal subunit protein uS15.